The sequence spans 330 residues: G-protein coupled receptor 3 (330 aa).

Residues 1-42 (MMWGAGSSMAWFSAGSGSVNVSSVDPVEEPTGPATLLPSPRA) are Extracellular-facing. Asn20 carries an N-linked (GlcNAc...) asparagine glycan. Residues 43-62 (WDVVLCISGTLVSCENALVV) traverse the membrane as a helical segment. At 63 to 74 (AIIVGTPAFRAP) the chain is on the cytoplasmic side. Residues 75–98 (MFLLVGSLAVADLLAGLGLVLHFA) form a helical membrane-spanning segment. The Extracellular segment spans residues 99 to 110 (ADFCIGSPEMSL). The helical transmembrane segment at 111 to 132 (MLVGVLAMAFTASIGSLLAITV) threads the bilayer. The Cytoplasmic portion of the chain corresponds to 133 to 153 (DRYLSLYNALTYYSETTVTRT). The chain crosses the membrane as a helical span at residues 154-173 (YVMLALVWVGALGLGLVPVL). Over 174 to 198 (AWNCRDGLTTCGVVYPLSKNHLVVL) the chain is Extracellular. The chain crosses the membrane as a helical span at residues 199-217 (AIAFFMVFGIMLQLYAQIC). Residues 218–245 (RIVCRHAQQIALQRHLLPASHYVATRKG) lie on the Cytoplasmic side of the membrane. The chain crosses the membrane as a helical span at residues 246 to 272 (IATLAVVLGAFAACWLPFTVYCLLGDA). Over 273–277 (DSPRL) the chain is Extracellular. The helical transmembrane segment at 278-299 (YTYLTLLPATYNSMINPVIYAF) threads the bilayer. At 300–330 (RNQDVQKVLWAICCCCSTSKIPFRSRSPSDV) the chain is on the cytoplasmic side. Cys313 is lipidated: S-palmitoyl cysteine. A phosphoserine mark is found at Ser324, Ser326, and Ser328.

Belongs to the G-protein coupled receptor 1 family. As to expression, expressed in both the forebrain and hindbrain, with the highest level in habenula. Lower level expression in the testis. Expressed in several metabolically active peripheral tissues, although at lower levels than in the central nervous system (CNS).

It localises to the cell membrane. Its function is as follows. Constitutively active G-protein coupled receptor that maintains high 3'-5'-cyclic adenosine monophosphate (cAMP) levels that a plays a role in serveral processes including meiotic arrest in oocytes or neuronal development via activation of numerous intracellular signaling pathways. Acts as an essential activator of thermogenic adipocytes and drives thermogenesis via its intrinsic G(s)-coupling activity without the requirement of a ligand. Has a potential role in modulating a number of brain functions, including behavioral responses to stress, amyloid-beta peptide generation in neurons. Stimulates neurite outgrowth in cerebellar granular neurons modulated via PKA, ERK, and most strongly PI3K-mediated signaling pathways. This Mus musculus (Mouse) protein is G-protein coupled receptor 3 (Gpr3).